The chain runs to 144 residues: Large ribosomal subunit protein bL31c (144 aa).

A chloroplast-targeting transit peptide spans Met-1–Cys-48.

The protein belongs to the bacterial ribosomal protein bL31 family. Type A subfamily. Part of the 50S ribosomal subunit.

It is found in the plastid. Its subcellular location is the chloroplast. Functionally, binds the 23S rRNA. The protein is Large ribosomal subunit protein bL31c (RPL31) of Arabidopsis thaliana (Mouse-ear cress).